Here is a 465-residue protein sequence, read N- to C-terminus: Antithrombin-III (465 aa).

An N-terminal signal peptide occupies residues M1 to C32. Cystine bridges form between C41–C161 and C54–C128. T64 carries the post-translational modification Phosphothreonine. A Phosphoserine modification is found at S69. W82 is a heparin binding site. N129 carries N-linked (GlcNAc...) asparagine glycosylation. R162 is a binding site for heparin. Residue N168 is glycosylated (N-linked (GlcNAc...) asparagine). R178 provides a ligand contact to heparin. N-linked (GlcNAc...) asparagine glycans are attached at residues N188 and N225. An intrachain disulfide couples C280 to C463.

Belongs to the serpin family. Forms protease inhibiting heterodimer with TMPRSS7. Post-translationally, phosphorylated by FAM20C in the extracellular medium. As to expression, plasma.

The protein localises to the secreted. The protein resides in the extracellular space. Its function is as follows. Most important serine protease inhibitor in plasma that regulates the blood coagulation cascade. AT-III inhibits thrombin, matriptase-3/TMPRSS7, as well as factors IXa, Xa and XIa. Its inhibitory activity is greatly enhanced in the presence of heparin. The sequence is that of Antithrombin-III (SERPINC1) from Bos taurus (Bovine).